A 231-amino-acid chain; its full sequence is Ribose-5-phosphate isomerase A (231 aa).

Substrate contacts are provided by residues 28 to 31, 83 to 86, and 96 to 99; these read TGST, DGAD, and KGGG. Catalysis depends on Glu-105, which acts as the Proton acceptor. Lys-123 contributes to the substrate binding site.

This sequence belongs to the ribose 5-phosphate isomerase family. As to quaternary structure, homodimer.

The enzyme catalyses aldehydo-D-ribose 5-phosphate = D-ribulose 5-phosphate. It participates in carbohydrate degradation; pentose phosphate pathway; D-ribose 5-phosphate from D-ribulose 5-phosphate (non-oxidative stage): step 1/1. Catalyzes the reversible conversion of ribose-5-phosphate to ribulose 5-phosphate. The sequence is that of Ribose-5-phosphate isomerase A from Sinorhizobium fredii (strain NBRC 101917 / NGR234).